A 546-amino-acid chain; its full sequence is Aladin (546 aa).

Residue Cys-2 is modified to N-acetylcysteine. Ser-33 carries the post-translational modification Phosphoserine. 7 WD repeats span residues Glu-142 to Ala-180, Thr-183 to Leu-222, Gly-234 to Val-274, Val-280 to Ala-316, Trp-324 to Asp-380, Ile-386 to Thr-433, and Leu-442 to Ile-482. Phosphoserine is present on residues Ser-495, Ser-511, Ser-522, and Ser-525. The tract at residues Arg-500–Leu-546 is disordered. The span at Asp-529–Pro-539 shows a compositional bias: pro residues. Ser-541 bears the Phosphoserine mark. The Microbody targeting signal signature appears at Ser-544 to Leu-546.

As to quaternary structure, interacts with NDC1, the interaction is required for nuclear pore localization. Interacts with the inactive form aurora kinase AURKA. Interacts with PGRMC2. As to expression, widely expressed. Particularly abundant in cerebellum, corpus callosum, adrenal gland, pituitary gland, gastrointestinal structures and fetal lung.

The protein resides in the nucleus. Its subcellular location is the nuclear pore complex. It is found in the cytoplasm. It localises to the cytoskeleton. The protein localises to the spindle pole. The protein resides in the nucleus envelope. Plays a role in the normal development of the peripheral and central nervous system. Required for the correct localization of aurora kinase AURKA and the microtubule minus end-binding protein NUMA1 as well as a subset of AURKA targets which ensures proper spindle formation and timely chromosome alignment. The protein is Aladin (AAAS) of Homo sapiens (Human).